A 134-amino-acid chain; its full sequence is Small ribosomal subunit protein uS11 (134 aa).

Belongs to the universal ribosomal protein uS11 family. Part of the 30S ribosomal subunit. Interacts with proteins S7 and S18. Binds to IF-3.

Its function is as follows. Located on the platform of the 30S subunit, it bridges several disparate RNA helices of the 16S rRNA. Forms part of the Shine-Dalgarno cleft in the 70S ribosome. The chain is Small ribosomal subunit protein uS11 from Salinibacter ruber (strain DSM 13855 / M31).